Reading from the N-terminus, the 352-residue chain is Divinyl chlorophyll a/b light-harvesting protein PcbH (352 aa).

A run of 6 helical transmembrane segments spans residues F27–L47, V88–A108, F140–A160, V202–A222, A242–A262, and L309–L329.

It belongs to the PsbB/PsbC family. IsiA/Pcb subfamily. As to quaternary structure, the antenna complex consists of divinyl chlorophylls (a and b) and divinyl chlorophyll a/b binding proteins and binds more divinyl chlorophyll b than does the antenna complex from high-light-adapted Prochlorococcus. Divinyl chlorophyll a serves as cofactor. It depends on divinyl chlorophyll b as a cofactor.

It is found in the cellular thylakoid membrane. In terms of biological role, the antenna complex functions as a light receptor, it captures and delivers excitation energy to photosystems II and I. The Prochlorales pcb genes are not related to higher plant LHCs. This chain is Divinyl chlorophyll a/b light-harvesting protein PcbH (pcbH), found in Prochlorococcus marinus (strain SARG / CCMP1375 / SS120).